We begin with the raw amino-acid sequence, 386 residues long: Heat-inducible transcription repressor HrcA (386 aa).

It belongs to the HrcA family.

Functionally, negative regulator of class I heat shock genes (grpE-dnaK-dnaJ and groELS operons). Prevents heat-shock induction of these operons. The protein is Heat-inducible transcription repressor HrcA of Chlamydia felis (strain Fe/C-56) (Chlamydophila felis).